An 80-amino-acid chain; its full sequence is Metallothionein-like protein 1 (80 aa).

The protein belongs to the metallothionein superfamily. Type 15 family.

Its function is as follows. Metallothioneins have a high content of cysteine residues that bind various heavy metals. The sequence is that of Metallothionein-like protein 1 (METAL1) from Coffea arabica (Arabian coffee).